We begin with the raw amino-acid sequence, 153 residues long: Transcriptional repressor NrdR (153 aa).

Residues cysteine 3–cysteine 34 fold into a zinc finger. The ATP-cone domain occupies isoleucine 49–threonine 139.

This sequence belongs to the NrdR family. Requires Zn(2+) as cofactor.

Its function is as follows. Negatively regulates transcription of bacterial ribonucleotide reductase nrd genes and operons by binding to NrdR-boxes. In Caldicellulosiruptor bescii (strain ATCC BAA-1888 / DSM 6725 / KCTC 15123 / Z-1320) (Anaerocellum thermophilum), this protein is Transcriptional repressor NrdR.